The sequence spans 174 residues: Co-chaperone protein HscB homolog (174 aa).

The 73-residue stretch at 2–74 (NYFELFKFPP…IRRAEHMLSL (73 aa)) folds into the J domain.

The protein belongs to the HscB family. Interacts with HscA and stimulates its ATPase activity.

Functionally, co-chaperone involved in the maturation of iron-sulfur cluster-containing proteins. Seems to help targeting proteins to be folded toward HscA. This is Co-chaperone protein HscB homolog from Shewanella oneidensis (strain ATCC 700550 / JCM 31522 / CIP 106686 / LMG 19005 / NCIMB 14063 / MR-1).